An 89-amino-acid polypeptide reads, in one-letter code: Small ribosomal subunit protein uS17 (89 aa).

This sequence belongs to the universal ribosomal protein uS17 family. In terms of assembly, part of the 30S ribosomal subunit.

In terms of biological role, one of the primary rRNA binding proteins, it binds specifically to the 5'-end of 16S ribosomal RNA. The polypeptide is Small ribosomal subunit protein uS17 (Delftia acidovorans (strain DSM 14801 / SPH-1)).